Consider the following 555-residue polypeptide: WRKY transcription factor WRKY24 (555 aa).

Disordered stretches follow at residues 38-65 and 132-248; these read GGGG…PSSF and QTAP…CTFP. The span at 51-61 shows a compositional bias: pro residues; sequence PSLPLSPPPVS. The segment covering 163 to 194 has biased composition (low complexity); the sequence is QQQQQPWGYQQQPAGMDAGANAASFGAAPFQA. A DNA-binding region (WRKY 1) is located at residues 214–278; sequence SQRRSSDDGY…YKGTHNHAKP (65 aa). The Nuclear localization signal motif lies at 253–259; the sequence is KKKVERS. The tract at residues 270–367 is disordered; the sequence is KGTHNHAKPQ…EGISMAGNRT (98 aa). Polar residues-rich tracts occupy residues 277–294 and 310–320; these read KPQN…QVLQ and TAATPENSSAS. Over residues 347 to 356 the composition is skewed to basic and acidic residues; it reads DSKRWRKDGD. The WRKY 2 DNA-binding region spans 379–444; that stretch reads SDIDILDDGY…YEGKHNHDVP (66 aa). Positions 466-555 are transcription repression of gibberellic acid (GA)-induced promoters; that stretch reads HPYLPNQPPP…DDMFFQNSLY (90 aa). Disordered stretches follow at residues 471 to 498 and 513 to 555; these read NQPP…GQGP and GFDD…NSLY.

This sequence belongs to the WRKY group II-a family. Expressed in aleurone cells. Mostly expressed in aleurone layers and leaves, and, to a lower extent, in roots, panicles and embryos.

The protein localises to the nucleus. Transcription repressor. Interacts specifically with the W box (5'-(T)TGAC[CT]-3'), a frequently occurring elicitor-responsive cis-acting element. Negative regulator of both gibberellic acid (GA) and abscisic acid (ABA) signaling in aleurone cells, probably by interfering with GAM1, via the specific repression of GA- and ABA-induced promoters. In Oryza sativa subsp. indica (Rice), this protein is WRKY transcription factor WRKY24.